The following is a 268-amino-acid chain: MTNSSSSKKQAQDQPETSEPTLKSLKTKMTKSDEKQKKLKDIEISVPIVYGNVAFWLGKKASEYQSHKWAVYVRGATNEDISVVVKKVVFQLHSSFNSPTRVIEEPPFEVSESGWGEFEIAMTLHFHSDVCDKPLSLYHHLKLYPEDESGPLTMKKPVVVESYDEIVFPDPSESFLARVQNHPALTFPRLPSGYNLPAPMQVEDTGKKKRGDTKDHSLGQWFMSFSEADELLQLAAARQQVQAHIAKLRRQISLLEGQNQTVKTGSDL.

Over residues 1–20 (MTNSSSSKKQAQDQPETSEP) the composition is skewed to polar residues. The disordered stretch occupies residues 1-36 (MTNSSSSKKQAQDQPETSEPTLKSLKTKMTKSDEKQ). The region spanning 38–182 (KLKDIEISVP…ESFLARVQNH (145 aa)) is the YEATS domain. Residues 229 to 263 (DELLQLAAARQQVQAHIAKLRRQISLLEGQNQTVK) are a coiled coil.

It belongs to the YAF9 family. In terms of assembly, component of the TFIID complex. TFIID is composed of TATA binding protein (TBP) and a number of TBP-associated factors (TAFs) whose MWs range from 14-217 kDa. Interacts with TAF1, TAF4B and TAF12B. Component of the SWR1 chromatin-remodeling complex. Interacts with FLX, a component of the transcription activator complex FRI-C. Interacts with SWC4, and with EAF1A and EAF1B (via HSA domain). In terms of tissue distribution, expressed in roots, leaves, inflorescence and flowering tissues.

The protein localises to the cytoplasm. Its subcellular location is the nucleus. Negative regulator of flowering controlling the H4K5 acetylation levels in the FLC and FT chromatin. Positively regulates FLC expression. Component of the transcription factor IID (TFIID) complex that is essential for mediating regulation of RNA polymerase transcription. Component of the SWR1 complex which mediates the ATP-dependent exchange of histone H2A for the H2A variant HZT1 leading to transcriptional regulation of selected genes by chromatin remodeling. Component of a NuA4 histone acetyltransferase complex which is involved in transcriptional activation of selected genes principally by acetylation of nucleosomal histones H4 and H2A. This is Transcription initiation factor TFIID subunit 14b from Arabidopsis thaliana (Mouse-ear cress).